Reading from the N-terminus, the 158-residue chain is MKKIAIYPGSFDPITNGHVDLIKRASKLFDEIIIGISQNSKKKAFLSINDRIDTINTALKDINNIRILSFDTLLVDFASLKNAQVILRGLRAISDFEYEYQLSGINKHLNPNIETLFMTPTEQYANISSSLIKEIIALGGDISVFVPASVKTLLKHRL.

Ser-10 is a substrate binding site. Residues Ser-10–Phe-11 and His-18 contribute to the ATP site. Substrate is bound by residues Lys-42, Leu-74, and Arg-88. Residues Gly-89–Arg-91, Glu-99, and Tyr-124–Ser-130 contribute to the ATP site.

The protein belongs to the bacterial CoaD family. Homohexamer. Requires Mg(2+) as cofactor.

The protein resides in the cytoplasm. It carries out the reaction (R)-4'-phosphopantetheine + ATP + H(+) = 3'-dephospho-CoA + diphosphate. The protein operates within cofactor biosynthesis; coenzyme A biosynthesis; CoA from (R)-pantothenate: step 4/5. Its function is as follows. Reversibly transfers an adenylyl group from ATP to 4'-phosphopantetheine, yielding dephospho-CoA (dPCoA) and pyrophosphate. In Vesicomyosocius okutanii subsp. Calyptogena okutanii (strain HA), this protein is Phosphopantetheine adenylyltransferase.